Here is a 434-residue protein sequence, read N- to C-terminus: MPKTDIARRVYNHTWKLDPIIRSLLDTDFYKLLMLQMIWQLYPDVDATFSLINRTKTVRLADEIDEQELRDQLDHARGLRFTKKEMIWLAGNSFYGRKQIFAPEFLVWLAKFRLPPYELSRRDGQFELTFRGRWAETTMWEIPALAIINELRSRAAMKGLGPFTLDVLYARAKARMWLKVEQLREHPNLRISDFGTRRRHSFLWQRWCVEALKEGIGPSFTGSSNVLLAMDNDLEAVGTNAHELPMVAAALARNDRELAAAPYKVLQDWNQLYGGNLLIVLPDAFGTAAFLRDAPDWVADWTGFRPDSAPPIEGGEKIIAWWKKMGRDPREKLLIFSDGLDVDTIVKTYCHFEGRVRMSFGWGTNLTNDFAGCAPTEINGLNPISVVCKVSEANGHPAVKLSDNPRKATGDPGEVERYLRFFGSEDFVEQSVRV.

Position 242 is a phosphohistidine; by autocatalysis (His242).

Belongs to the NAPRTase family. Post-translationally, transiently phosphorylated on a His residue during the reaction cycle. Phosphorylation strongly increases the affinity for substrates and increases the rate of nicotinate D-ribonucleotide production. Dephosphorylation regenerates the low-affinity form of the enzyme, leading to product release.

The enzyme catalyses nicotinate + 5-phospho-alpha-D-ribose 1-diphosphate + ATP + H2O = nicotinate beta-D-ribonucleotide + ADP + phosphate + diphosphate. Its pathway is cofactor biosynthesis; NAD(+) biosynthesis; nicotinate D-ribonucleotide from nicotinate: step 1/1. Catalyzes the synthesis of beta-nicotinate D-ribonucleotide from nicotinate and 5-phospho-D-ribose 1-phosphate at the expense of ATP. The chain is Nicotinate phosphoribosyltransferase from Sinorhizobium medicae (strain WSM419) (Ensifer medicae).